The chain runs to 287 residues: Energy-coupling factor transporter ATP-binding protein EcfA2 (287 aa).

In terms of domain architecture, ABC transporter spans 3–245; that stretch reads IKFENVSYVY…SEWLQKHHLA (243 aa). 40–47 contacts ATP; that stretch reads GHTGSGKS.

Belongs to the ABC transporter superfamily. Energy-coupling factor EcfA family. In terms of assembly, forms a stable energy-coupling factor (ECF) transporter complex composed of 2 membrane-embedded substrate-binding proteins (S component), 2 ATP-binding proteins (A component) and 2 transmembrane proteins (T component).

It localises to the cell membrane. Functionally, ATP-binding (A) component of a common energy-coupling factor (ECF) ABC-transporter complex. Unlike classic ABC transporters this ECF transporter provides the energy necessary to transport a number of different substrates. This chain is Energy-coupling factor transporter ATP-binding protein EcfA2, found in Lactobacillus delbrueckii subsp. bulgaricus (strain ATCC 11842 / DSM 20081 / BCRC 10696 / JCM 1002 / NBRC 13953 / NCIMB 11778 / NCTC 12712 / WDCM 00102 / Lb 14).